The following is a 309-amino-acid chain: Glycine--tRNA ligase alpha subunit (309 aa).

This sequence belongs to the class-II aminoacyl-tRNA synthetase family. As to quaternary structure, tetramer of two alpha and two beta subunits.

The protein localises to the cytoplasm. The enzyme catalyses tRNA(Gly) + glycine + ATP = glycyl-tRNA(Gly) + AMP + diphosphate. This chain is Glycine--tRNA ligase alpha subunit, found in Anaeromyxobacter sp. (strain K).